Consider the following 152-residue polypeptide: Large ribosomal subunit protein bL9 (152 aa).

Belongs to the bacterial ribosomal protein bL9 family.

Functionally, binds to the 23S rRNA. This Synechocystis sp. (strain ATCC 27184 / PCC 6803 / Kazusa) protein is Large ribosomal subunit protein bL9.